We begin with the raw amino-acid sequence, 157 residues long: Small ribosomal subunit protein uS7 (157 aa).

Belongs to the universal ribosomal protein uS7 family. Part of the 30S ribosomal subunit. Contacts proteins S9 and S11.

Functionally, one of the primary rRNA binding proteins, it binds directly to 16S rRNA where it nucleates assembly of the head domain of the 30S subunit. Is located at the subunit interface close to the decoding center, probably blocks exit of the E-site tRNA. The polypeptide is Small ribosomal subunit protein uS7 (Chloroflexus aggregans (strain MD-66 / DSM 9485)).